Consider the following 284-residue polypeptide: Actin-like protein ARP10 (284 aa).

It belongs to the actin family. ARP10 subfamily. As to quaternary structure, self-associates. Component of the dynactin complex composed of at least ARP1, JNM1, NIP100 and ARP10. Dynactin comprises a short rod of the ARP1 filament attached to ARP10 at its pointed-end and probably associated with the capping protein at its barbed-end. The rod is implicated in dynein cargo binding. A sidearm formed by NIP100 projects from the ARP1 filament and is implicated in motor binding. Interacts with ARP1 and JNM1.

Its subcellular location is the cytoplasm. The protein localises to the cytoskeleton. In terms of biological role, pointed-end-associated component of the dynactin complex which assists cytoplasmic dynein by increasing its processivity and by regulation of its cargo binding. The dynactin complex is required for the spindle translocation late in anaphase and is involved in a cell wall synthesis checkpoint. May regulate the association of the dynactin complex with the plasma membrane. The protein is Actin-like protein ARP10 (ARP10) of Saccharomyces cerevisiae (strain ATCC 204508 / S288c) (Baker's yeast).